The sequence spans 110 residues: Progonadoliberin-2 (110 aa).

The first 26 residues, 1–26, serve as a signal peptide directing secretion; it reads MASIGQGLVLLLLLLLLTAQPGPLKA. Residues 25 to 85 form a disordered region; it reads KAQHWSHGWY…KALAPPEDTV (61 aa). Gly36 carries the glycine amide modification.

It belongs to the GnRH family. In terms of tissue distribution, midbrain.

The protein resides in the secreted. Functionally, stimulates the secretion of gonadotropins; it stimulates the secretion of both luteinizing and follicle-stimulating hormones. The protein is Progonadoliberin-2 (GNRH2) of Suncus murinus (Asian house shrew).